A 516-amino-acid polypeptide reads, in one-letter code: MALSQFVPFSATELLLASAIFCLVFWVLRGSRPRVPKGLKSPPEPWGWPLLGHVLTLGKNPHLALSRMSQLYGDVLQIRIGSTPVLVLSGLDTIRQALVRQGDDFKGRPDLYSFTFITDGQSMSFSPDSGPVWAARRRLAQNALNTFSIASDPASSSSCYLEEHVSKEAEALISRLQELMAGPGHFDPYNQVVVSVANVIGAMCFGQHFPESSDEMLSLVKNSHEFVESASSGNPVDFFPILRYLPNPALQRFKAFNQRFRRFLQKTVQEHYQDFDKNSVQDITGALFKHSKKGPRASGNLIPQEKIVNLVNDIFGAEFDTIATAISWSLMYLVTKPEIQRKIQKELDAVIGRGRRPRLSDRPQLPYLEAFILETFRHSSFVPFTIPHSTTRDTTLNGFYIPRECCVFINQWQVNHDPQLWGDPSEFRPERFLTAEGTTINKPLSEKIMLFGLGKRRCIGEVLGKWEVFLFLAILLQQLEFSVPPGVKVDLTPIYGLTMKHARCEHFQARLRFSFQ.

A glycan (O-linked (GlcNAc) serine) is linked at Ser69. Substrate is bound at residue Phe226. Cys458 provides a ligand contact to heme.

It belongs to the cytochrome P450 family. Interacts with PGRMC1; the interaction requires PGRMC1 homodimerization. Heme serves as cofactor.

It is found in the endoplasmic reticulum membrane. The protein resides in the microsome membrane. The catalysed reaction is an organic molecule + reduced [NADPH--hemoprotein reductase] + O2 = an alcohol + oxidized [NADPH--hemoprotein reductase] + H2O + H(+). The enzyme catalyses 17beta-estradiol + reduced [NADPH--hemoprotein reductase] + O2 = 2-hydroxy-17beta-estradiol + oxidized [NADPH--hemoprotein reductase] + H2O + H(+). It carries out the reaction 17beta-estradiol + reduced [NADPH--hemoprotein reductase] + O2 = 4-hydroxy-17beta-estradiol + oxidized [NADPH--hemoprotein reductase] + H2O + H(+). It catalyses the reaction estrone + reduced [NADPH--hemoprotein reductase] + O2 = 2-hydroxyestrone + oxidized [NADPH--hemoprotein reductase] + H2O + H(+). The catalysed reaction is estrone + reduced [NADPH--hemoprotein reductase] + O2 = 4-hydroxyestrone + oxidized [NADPH--hemoprotein reductase] + H2O + H(+). The enzyme catalyses cholesterol + reduced [NADPH--hemoprotein reductase] + O2 = 25-hydroxycholesterol + oxidized [NADPH--hemoprotein reductase] + H2O + H(+). It carries out the reaction all-trans-retinol + reduced [NADPH--hemoprotein reductase] + O2 = all-trans-retinal + oxidized [NADPH--hemoprotein reductase] + 2 H2O + H(+). It catalyses the reaction all-trans-retinal + reduced [NADPH--hemoprotein reductase] + O2 = all-trans-retinoate + oxidized [NADPH--hemoprotein reductase] + H2O + 2 H(+). The catalysed reaction is (5Z,8Z,11Z,14Z)-eicosatetraenoate + reduced [NADPH--hemoprotein reductase] + O2 = (14R,15S)-epoxy-(5Z,8Z,11Z)-eicosatrienoate + oxidized [NADPH--hemoprotein reductase] + H2O + H(+). The enzyme catalyses (5Z,8Z,11Z,14Z)-eicosatetraenoate + reduced [NADPH--hemoprotein reductase] + O2 = (14S,15R)-epoxy-(5Z,8Z,11Z)-eicosatrienoate + oxidized [NADPH--hemoprotein reductase] + H2O + H(+). It carries out the reaction (5Z,8Z,11Z,14Z,17Z)-eicosapentaenoate + reduced [NADPH--hemoprotein reductase] + O2 = (17R,18S)-epoxy-(5Z,8Z,11Z,14Z)-eicosatetraenoate + oxidized [NADPH--hemoprotein reductase] + H2O + H(+). It catalyses the reaction (4Z,7Z,10Z,13Z,16Z,19Z)-docosahexaenoate + reduced [NADPH--hemoprotein reductase] + O2 = (19R,20S)-epoxy-(4Z,7Z,10Z,13Z,16Z)-docosapentaenoate + oxidized [NADPH--hemoprotein reductase] + H2O + H(+). The catalysed reaction is (5S)-hydroperoxy-(6E,8Z,11Z,14Z)-eicosatetraenoate = 5-oxo-(6E,8Z,11Z,14Z)-eicosatetraenoate + H2O. The enzyme catalyses (12S)-hydroperoxy-(5Z,8Z,10E,14Z)-eicosatetraenoate = 12-oxo-(5Z,8Z,10E,14Z)-eicosatetraenoate + H2O. It carries out the reaction (15S)-hydroperoxy-(5Z,8Z,11Z,13E)-eicosatetraenoate = 15-oxo-(5Z,8Z,11Z,13E)-eicosatetraenoate + H2O. It catalyses the reaction (13S)-hydroperoxy-(9Z,11E)-octadecadienoate = 13-oxo-(9Z,11E)-octadecadienoate + H2O. The catalysed reaction is (5Z,8Z,11Z,14Z)-eicosatetraenoate + reduced [NADPH--hemoprotein reductase] + O2 = 13-hydroxy-(5Z,8Z,11Z,14Z)-eicosatetraenoate + oxidized [NADPH--hemoprotein reductase] + H2O + H(+). The enzyme catalyses (5Z,8Z,11Z,14Z)-eicosatetraenoate + reduced [NADPH--hemoprotein reductase] + O2 = 19-hydroxy-(5Z,8Z,11Z,14Z)-eicosatetraenoate + oxidized [NADPH--hemoprotein reductase] + H2O + H(+). It carries out the reaction (9Z,12Z)-octadecadienoate + reduced [NADPH--hemoprotein reductase] + O2 = 11-hydroxy-(9Z,12Z)-octadecadienoate + oxidized [NADPH--hemoprotein reductase] + H2O + H(+). It functions in the pathway cofactor metabolism; retinol metabolism. The protein operates within steroid metabolism; cholesterol metabolism. Its pathway is lipid metabolism; arachidonate metabolism. A cytochrome P450 monooxygenase involved in the metabolism of various endogenous substrates, including fatty acids, steroid hormones and vitamins. Mechanistically, uses molecular oxygen inserting one oxygen atom into a substrate, and reducing the second into a water molecule, with two electrons provided by NADPH via cytochrome P450 reductase (NADPH--hemoprotein reductase). Catalyzes the hydroxylation of carbon-hydrogen bonds. Exhibits high catalytic activity for the formation of hydroxyestrogens from estrone (E1) and 17beta-estradiol (E2), namely 2-hydroxy E1 and E2. Metabolizes cholesterol toward 25-hydroxycholesterol, a physiological regulator of cellular cholesterol homeostasis. May act as a major enzyme for all-trans retinoic acid biosynthesis in the liver. Catalyzes two successive oxidative transformation of all-trans retinol to all-trans retinal and then to the active form all-trans retinoic acid. Primarily catalyzes stereoselective epoxidation of the last double bond of polyunsaturated fatty acids (PUFA), displaying a strong preference for the (R,S) stereoisomer. Catalyzes bisallylic hydroxylation and omega-1 hydroxylation of PUFA. May also participate in eicosanoids metabolism by converting hydroperoxide species into oxo metabolites (lipoxygenase-like reaction, NADPH-independent). Plays a role in the oxidative metabolism of xenobiotics. Catalyzes the N-hydroxylation of heterocyclic amines and the O-deethylation of phenacetin. Metabolizes caffeine via N3-demethylation. The polypeptide is Cytochrome P450 1A2 (CYP1A2) (Macaca fuscata fuscata (Japanese macaque)).